A 398-amino-acid chain; its full sequence is MSQKLILVLNCGSSSLKGAVLDNGSGEVLLSCLAEKLNLPDAYITFKVNGEKHKVDLSAHPDHTGAVEALMEELKAHGLDSRIGAIGHRVVSGGELYSESILVDDEVIAGIEKCIPLAPLHNPAHLLGLRAAQSIFKGLPNVVVFDTSFHQTMPEVAYKYAVPQELYEKYGLRRYGAHGTSYRFVADETARFLGKDKKDLRMVIAHLGNGASITAVANGESRDTSMGLTPLEGLVMGTRSGDIDPSVFGFLAENANMTIAQITEMLNKKSGLLGISGLSNDCRTIEEEAAKGHKGAKLALDMFIYRLAKYIGSMAVAAGGLDALVFTGGIGENSDIIRERVIGYLGFLGLNIDQEANLKARFGNAGVITTADSKAVAVVIPTNEELMIAHDTARLSGL.

Asn-10 is a binding site for Mg(2+). Lys-17 provides a ligand contact to ATP. Residue Arg-89 participates in substrate binding. The Proton donor/acceptor role is filled by Asp-146. Residues 206 to 210 (HLGNG), 281 to 283 (DCR), and 329 to 333 (GIGEN) contribute to the ATP site. Glu-384 contributes to the Mg(2+) binding site.

The protein belongs to the acetokinase family. As to quaternary structure, homodimer. It depends on Mg(2+) as a cofactor. Mn(2+) is required as a cofactor.

Its subcellular location is the cytoplasm. It carries out the reaction acetate + ATP = acetyl phosphate + ADP. Its pathway is metabolic intermediate biosynthesis; acetyl-CoA biosynthesis; acetyl-CoA from acetate: step 1/2. Its function is as follows. Catalyzes the formation of acetyl phosphate from acetate and ATP. Can also catalyze the reverse reaction. This chain is Acetate kinase 1, found in Neisseria meningitidis serogroup B (strain ATCC BAA-335 / MC58).